The following is a 60-amino-acid chain: Large ribosomal subunit protein bL32 (60 aa).

Positions 1-20 are enriched in basic residues; that stretch reads MAKPARHTSKAKRNKRRTHY. Residues 1–22 are disordered; it reads MAKPARHTSKAKRNKRRTHYKL.

The protein belongs to the bacterial ribosomal protein bL32 family.

The protein is Large ribosomal subunit protein bL32 of Streptococcus agalactiae serotype V (strain ATCC BAA-611 / 2603 V/R).